A 185-amino-acid chain; its full sequence is Small ribosomal subunit protein uS5c (185 aa).

The region spanning 26-89 is the S5 DRBM domain; the sequence is FVERLIKISR…ADGRKNLIKI (64 aa).

It belongs to the universal ribosomal protein uS5 family. In terms of assembly, part of the 30S ribosomal subunit. Contacts protein S4.

It localises to the plastid. Its subcellular location is the chloroplast. In terms of biological role, with S4 and S12 plays an important role in translational accuracy. This Trieres chinensis (Marine centric diatom) protein is Small ribosomal subunit protein uS5c (rps5).